The following is a 95-amino-acid chain: Large ribosomal subunit protein uL23 (95 aa).

Belongs to the universal ribosomal protein uL23 family. As to quaternary structure, part of the 50S ribosomal subunit. Contacts protein L29, and trigger factor when it is bound to the ribosome.

In terms of biological role, one of the early assembly proteins it binds 23S rRNA. One of the proteins that surrounds the polypeptide exit tunnel on the outside of the ribosome. Forms the main docking site for trigger factor binding to the ribosome. The protein is Large ribosomal subunit protein uL23 of Geobacillus kaustophilus (strain HTA426).